The chain runs to 342 residues: 4-hydroxy-2-oxovalerate aldolase (342 aa).

The 253-residue stretch at 5 to 257 folds into the Pyruvate carboxyltransferase domain; it reads ITLHDMTLRD…DTGVDVWKIQ (253 aa). 13–14 lines the substrate pocket; that stretch reads RD. Position 14 (Asp-14) interacts with Mn(2+). His-17 functions as the Proton acceptor in the catalytic mechanism. Ser-167 and His-196 together coordinate substrate. His-196 and His-198 together coordinate Mn(2+). Tyr-287 is a binding site for substrate.

It belongs to the 4-hydroxy-2-oxovalerate aldolase family.

The catalysed reaction is (S)-4-hydroxy-2-oxopentanoate = acetaldehyde + pyruvate. The chain is 4-hydroxy-2-oxovalerate aldolase from Acidovorax sp. (strain JS42).